Here is a 169-residue protein sequence, read N- to C-terminus: Protein-export protein SecB (169 aa).

The protein belongs to the SecB family. Homotetramer, a dimer of dimers. One homotetramer interacts with 1 SecA dimer.

The protein localises to the cytoplasm. Its function is as follows. One of the proteins required for the normal export of preproteins out of the cell cytoplasm. It is a molecular chaperone that binds to a subset of precursor proteins, maintaining them in a translocation-competent state. It also specifically binds to its receptor SecA. This chain is Protein-export protein SecB, found in Mannheimia succiniciproducens (strain KCTC 0769BP / MBEL55E).